The following is a 153-amino-acid chain: Transcriptional repressor NrdR (153 aa).

A zinc finger spans residues 3 to 34 (CPFCAHDDSQVKDSRPAEDNAAIRRRRQCSKC). Residues 49–139 (VTVVKSDDKR…VYRDFSEARD (91 aa)) form the ATP-cone domain.

The protein belongs to the NrdR family. Zn(2+) serves as cofactor.

Its function is as follows. Negatively regulates transcription of bacterial ribonucleotide reductase nrd genes and operons by binding to NrdR-boxes. The polypeptide is Transcriptional repressor NrdR (Erythrobacter litoralis (strain HTCC2594)).